Consider the following 227-residue polypeptide: LexA repressor (227 aa).

The H-T-H motif DNA-binding region spans 26–46 (FDEMKEALDLASKSGIHRLIT). Active-site for autocatalytic cleavage activity residues include serine 147 and lysine 185.

Belongs to the peptidase S24 family. As to quaternary structure, homodimer.

It catalyses the reaction Hydrolysis of Ala-|-Gly bond in repressor LexA.. Its function is as follows. Represses a number of genes involved in the response to DNA damage (SOS response), including recA and lexA. In the presence of single-stranded DNA, RecA interacts with LexA causing an autocatalytic cleavage which disrupts the DNA-binding part of LexA, leading to derepression of the SOS regulon and eventually DNA repair. The protein is LexA repressor of Hyphomonas neptunium (strain ATCC 15444).